The primary structure comprises 277 residues: Large ribosomal subunit protein uL2 (277 aa).

Residues valine 227–lysine 277 are disordered. The segment covering lysine 266–lysine 277 has biased composition (basic and acidic residues).

This sequence belongs to the universal ribosomal protein uL2 family. Part of the 50S ribosomal subunit. Forms a bridge to the 30S subunit in the 70S ribosome.

Its function is as follows. One of the primary rRNA binding proteins. Required for association of the 30S and 50S subunits to form the 70S ribosome, for tRNA binding and peptide bond formation. It has been suggested to have peptidyltransferase activity; this is somewhat controversial. Makes several contacts with the 16S rRNA in the 70S ribosome. This is Large ribosomal subunit protein uL2 from Magnetococcus marinus (strain ATCC BAA-1437 / JCM 17883 / MC-1).